Here is a 439-residue protein sequence, read N- to C-terminus: Divalent metal cation transporter MntH 1 (439 aa).

Helical transmembrane passes span 64–84 (FGYA…LLQS), 139–161 (LLGV…VLAL), 171–191 (AIVL…LVLI), 214–234 (PLYL…LYLH), 262–282 (IGSL…AAAA), 300–320 (LLDP…ALLA), 359–379 (LVPA…KLLV), 380–400 (LSQV…IRFS), and 418–438 (LAWS…YFWF).

It belongs to the NRAMP family.

It is found in the cell inner membrane. Its function is as follows. H(+)-stimulated, divalent metal cation uptake system. The chain is Divalent metal cation transporter MntH 1 from Pseudomonas aeruginosa (strain ATCC 15692 / DSM 22644 / CIP 104116 / JCM 14847 / LMG 12228 / 1C / PRS 101 / PAO1).